Reading from the N-terminus, the 855-residue chain is Potassium channel AKT2 (855 aa).

Residues 1-12 (MKTSSFESASSS) show a composition bias toward low complexity. The segment at 1-24 (MKTSSFESASSSGGSGGGGGGGGG) is disordered. Residues 1–75 (MKTSSFESAS…PLDSRYRCWD (75 aa)) are Cytoplasmic-facing. Over residues 13–24 (GGSGGGGGGGGG) the composition is skewed to gly residues. The chain crosses the membrane as a helical span at residues 76–96 (TFMVVLVAYSAWVYPFEVAFM). Over 97 to 105 (NASPKGGLE) the chain is Extracellular. Residues 106 to 126 (VADIVVDLFFAVDIVLTFFVA) traverse the membrane as a helical segment. Over 127–149 (YIDSRTQLLVRDRRRIATRYLST) the chain is Cytoplasmic. Residues 150–170 (FFIMDVASTIPFQGLAYIVTG) form a helical membrane-spanning segment. Over 171 to 179 (EVRESPAFS) the chain is Extracellular. Residues 180 to 200 (LLGILRLWRLRKVKQFFTRLE) traverse the membrane as a helical; Voltage-sensor segment. At 201 to 214 (KDIRFNYFWIRCAR) the chain is on the cytoplasmic side. A helical membrane pass occupies residues 215-235 (LIAVTLFLVHCAGCLYYLIAD). The Extracellular segment spans residues 236 to 262 (RYPHREKTWIGAVIPDFQEASLWIRYT). Residues 263-282 (SSVYWSITTMTTVGYGDMHA) constitute an intramembrane region (pore-forming). The Extracellular segment spans residues 283-285 (QNT). The helical transmembrane segment at 286–306 (VEMIFNIFYMLFNLGLTAYLI) threads the bilayer. The Cytoplasmic portion of the chain corresponds to 307-855 (GNMTNLVVEG…VASMDSVSGS (549 aa)). 391 to 511 (LFKGVSREVL…VVIIKNFLKH (121 aa)) provides a ligand contact to a nucleoside 3',5'-cyclic phosphate. 5 ANK repeats span residues 536–565 (NIPCNLLTVAATGNSSFLEDLLKVGMDPDV), 569–598 (KGRTALHIAASKGYEDCVLVLLKQACNVNI), 602–631 (QGNTALWNAIAARHHKIFNILYHFARVSSP), 634–663 (AAGDLLCLAARRGDLDTLRELLKHGLAVDS), and 667–696 (DGATALRVALAEGHADVARLLVLNGASVDR). A disordered region spans residues 744–765 (EVGSSGDSRNGRRQSARSDGAH). Residues 768 to 855 (RVSIYRGHPF…VASMDSVSGS (88 aa)) enclose the KHA domain.

This sequence belongs to the potassium channel family. Plant (TC 1.A.1.4) subfamily. As to quaternary structure, the potassium channel is probably a homo- or heterotetrameric complex of pore-forming subunits.

The protein resides in the membrane. Probable inward-rectifying potassium channel. Assuming opened or closed conformations in response to the voltage difference across the membrane, the channel is activated by hyperpolarization. The chain is Potassium channel AKT2 from Oryza sativa subsp. japonica (Rice).